The chain runs to 343 residues: Signal peptide peptidase 1 (343 aa).

Residues 1–19 lie on the Lumenal side of the membrane; sequence MKTHERAANLALAGLSLAP. The helical transmembrane segment at 20–40 threads the bilayer; that stretch reads LVVKVEPNVNVILTACLAVYV. Topologically, residues 41-62 are cytoplasmic; the sequence is GCYRSVKPTPPSETMSKEHAMR. Residues 63–83 form a helical membrane-spanning segment; sequence FPLVGSAMLLSLFLLFKFLSK. Residues 84-87 are Lumenal-facing; sequence DLVN. A helical membrane pass occupies residues 88 to 108; sequence AVLTAYFFILGIAALCATLLP. Residues 109-136 are Cytoplasmic-facing; that stretch reads SIKRFLPKEWNDNAIVWCAPFFHSLSVE. A helical transmembrane segment spans residues 137–157; the sequence is FTKSQVVASIPGFFFCIWYAA. Residues 158-160 are Lumenal-facing; it reads KKH. The chain crosses the membrane as a helical span at residues 161 to 181; it reads WLANNVLGISFCIQGIEMLSL. The Cytoplasmic portion of the chain corresponds to 182–188; it reads GSFKTGA. Residues 189-209 form a helical membrane-spanning segment; the sequence is ILLAGLFFYDIFWVFFTPVMV. The active site involves Asp-198. The Lumenal portion of the chain corresponds to 210–230; the sequence is SVAKSFDAPIKLLFPTGDAAR. The helical transmembrane segment at 231–251 threads the bilayer; it reads PFSMLGLGDIVIPGIFVALAL. Asp-239 is a catalytic residue. At 252-266 the chain is on the cytoplasmic side; the sequence is RFDVSRGIKNRYFNS. The chain crosses the membrane as a helical span at residues 267-287; it reads AFLGYTVGLTVTIIVMNWFQA. The Lumenal segment spans residues 288–290; it reads AQP. A PAL motif is present at residues 290 to 292; that stretch reads PAL. Residues 291 to 311 traverse the membrane as a helical segment; the sequence is ALLYIVPGVIGFVAVHCLWNG. Residues 312-343 are Cytoplasmic-facing; the sequence is EVKPLLEYNESKAEEEDAVEEDTDSKQNKKEE. Residues 322–343 form a disordered region; the sequence is SKAEEEDAVEEDTDSKQNKKEE. Over residues 324–334 the composition is skewed to acidic residues; the sequence is AEEEDAVEEDT. Positions 340–343 match the Endoplasmic reticulum targeting signal motif; that stretch reads KKEE.

The protein belongs to the peptidase A22B family. In terms of tissue distribution, ubiquitous.

It localises to the endoplasmic reticulum membrane. Functionally, intramembrane-cleaving aspartic protease (I-CLiP) that cleaves type II membrane signal peptides in the hydrophobic plane of the membrane. Catalyzes intramembrane proteolysis of some signal peptides after they have been cleaved from a preprotein, resulting in the release of the fragment from the ER membrane into the cytoplasm. The polypeptide is Signal peptide peptidase 1 (SPP1) (Oryza sativa subsp. japonica (Rice)).